Reading from the N-terminus, the 323-residue chain is tRNA U34 carboxymethyltransferase (323 aa).

Carboxy-S-adenosyl-L-methionine contacts are provided by residues Lys-91, Trp-105, Lys-110, Gly-130, 180–181 (IE), Met-196, Tyr-200, and Arg-315.

The protein belongs to the class I-like SAM-binding methyltransferase superfamily. CmoB family. Homotetramer.

It catalyses the reaction carboxy-S-adenosyl-L-methionine + 5-hydroxyuridine(34) in tRNA = 5-carboxymethoxyuridine(34) in tRNA + S-adenosyl-L-homocysteine + H(+). Catalyzes carboxymethyl transfer from carboxy-S-adenosyl-L-methionine (Cx-SAM) to 5-hydroxyuridine (ho5U) to form 5-carboxymethoxyuridine (cmo5U) at position 34 in tRNAs. This chain is tRNA U34 carboxymethyltransferase, found in Geobacter sp. (strain M21).